The following is a 712-amino-acid chain: Glucans biosynthesis glucosyltransferase H (712 aa).

6 helical membrane passes run 57 to 77 (LAIM…MYQV), 89 to 109 (IVLA…VSAL), 408 to 428 (GIGS…GILI), 462 to 482 (FAGT…LVVI), 552 to 572 (YAAP…VSWP), and 573 to 593 (LLLW…VALL).

The protein belongs to the glycosyltransferase 2 family. OpgH subfamily.

Its subcellular location is the cell inner membrane. It participates in glycan metabolism; osmoregulated periplasmic glucan (OPG) biosynthesis. In terms of biological role, involved in the biosynthesis of osmoregulated periplasmic glucans (OPGs). In Rhodopseudomonas palustris (strain BisA53), this protein is Glucans biosynthesis glucosyltransferase H.